The sequence spans 178 residues: Nicotinamide-nucleotide adenylyltransferase (178 aa).

Belongs to the archaeal NMN adenylyltransferase family.

The protein resides in the cytoplasm. It catalyses the reaction beta-nicotinamide D-ribonucleotide + ATP + H(+) = diphosphate + NAD(+). It participates in cofactor biosynthesis; NAD(+) biosynthesis; NAD(+) from nicotinamide D-ribonucleotide: step 1/1. This Pyrobaculum aerophilum (strain ATCC 51768 / DSM 7523 / JCM 9630 / CIP 104966 / NBRC 100827 / IM2) protein is Nicotinamide-nucleotide adenylyltransferase.